Here is a 405-residue protein sequence, read N- to C-terminus: MDFRTYLKRYPDKNGRFGQYGGAYLTNELIPAFEEIADAYQTICHSSQFISELRRIRKEFQGRPTPVYHCERLSRAIGNCQIYLKREDLNHTGAHKLNHCMGEGLLAKFMGKKRLIAETGAGQHGVALATAAAFFGLECEIHMGEVDIAKQAPNVTRMKILGAKVVPVTHGLKTLKEAVDSAFDSYAKNYKDSIYCIGSALGPHPFPLMVRDFQAVVGYEAKDQFKEMTGFLPDVVTACVGGGSNAAGMFIPFLEEPVDIIGIEPLGRGEKLGDHAASMKYGEKGVMHGFESIMLKDKNGNPAPVYSIASGLDYPSVGPEHAFLRELGRVDYKVINDEEAMEAFFKLSRYEGIIPAIESSHAVAYAMKKAKEMKQGSILVCLSGRGDKDIDYVVEHYGYGEQYFK.

Position 96 is an N6-(pyridoxal phosphate)lysine (Lys-96).

The protein belongs to the TrpB family. In terms of assembly, tetramer of two alpha and two beta chains. Requires pyridoxal 5'-phosphate as cofactor.

The catalysed reaction is (1S,2R)-1-C-(indol-3-yl)glycerol 3-phosphate + L-serine = D-glyceraldehyde 3-phosphate + L-tryptophan + H2O. Its pathway is amino-acid biosynthesis; L-tryptophan biosynthesis; L-tryptophan from chorismate: step 5/5. The beta subunit is responsible for the synthesis of L-tryptophan from indole and L-serine. This Clostridium botulinum (strain Alaska E43 / Type E3) protein is Tryptophan synthase beta chain.